The following is a 43-amino-acid chain: Cytochrome b559 subunit beta (43 aa).

The chain crosses the membrane as a helical span at residues 18–34 (WLAVHTLAIPTVFFLGA). H22 is a binding site for heme.

Belongs to the PsbE/PsbF family. In terms of assembly, heterodimer of an alpha subunit and a beta subunit. PSII is composed of 1 copy each of membrane proteins PsbA, PsbB, PsbC, PsbD, PsbE, PsbF, PsbH, PsbI, PsbJ, PsbK, PsbL, PsbM, PsbT, PsbX, PsbY, PsbZ, Psb30/Ycf12, peripheral proteins PsbO, CyanoQ (PsbQ), PsbU, PsbV and a large number of cofactors. It forms dimeric complexes. Requires heme b as cofactor.

The protein resides in the cellular thylakoid membrane. Its function is as follows. This b-type cytochrome is tightly associated with the reaction center of photosystem II (PSII). PSII is a light-driven water:plastoquinone oxidoreductase that uses light energy to abstract electrons from H(2)O, generating O(2) and a proton gradient subsequently used for ATP formation. It consists of a core antenna complex that captures photons, and an electron transfer chain that converts photonic excitation into a charge separation. The sequence is that of Cytochrome b559 subunit beta from Synechococcus sp. (strain JA-2-3B'a(2-13)) (Cyanobacteria bacterium Yellowstone B-Prime).